Here is a 297-residue protein sequence, read N- to C-terminus: N-acetylneuraminate lyase (297 aa).

The aceneuramate site is built by Ser-47 and Thr-48. Tyr-137 serves as the catalytic Proton donor. Lys-165 serves as the catalytic Schiff-base intermediate with substrate. Thr-167, Gly-189, Asp-191, Glu-192, and Ser-208 together coordinate aceneuramate.

This sequence belongs to the DapA family. NanA subfamily. In terms of assembly, homotetramer.

It is found in the cytoplasm. It carries out the reaction aceneuramate = aldehydo-N-acetyl-D-mannosamine + pyruvate. It functions in the pathway amino-sugar metabolism; N-acetylneuraminate degradation; D-fructose 6-phosphate from N-acetylneuraminate: step 1/5. Functionally, catalyzes the reversible aldol cleavage of N-acetylneuraminic acid (sialic acid; Neu5Ac) to form pyruvate and N-acetylmannosamine (ManNAc) via a Schiff base intermediate. The chain is N-acetylneuraminate lyase from Salmonella typhimurium (strain LT2 / SGSC1412 / ATCC 700720).